Consider the following 585-residue polypeptide: Polyadenylate-binding protein, cytoplasmic and nuclear (585 aa).

The tract at residues 14–37 (QLKIEEQTAPTTTESETPKVETSG) is disordered. 4 RRM domains span residues 38–116 (ASLY…WSQR), 126–203 (GNIY…LHVS), 219–296 (TNVY…RAQK), and 322–399 (VNLF…IAQR). One can recognise a PABC domain in the interval 488–567 (GQFPRNGQQQ…AHAAYQKFKE (80 aa)).

It belongs to the polyadenylate-binding protein type-1 family.

It localises to the cytoplasm. It is found in the nucleus. Functionally, binds the poly(A) tail of mRNA. Appears to be an important mediator of the multiple roles of the poly(A) tail in mRNA biogenesis, stability and translation. In the nucleus, involved in both mRNA cleavage and polyadenylation. Is also required for efficient mRNA export to the cytoplasm. Acts in concert with a poly(A)-specific nuclease (PAN) to affect poly(A) tail shortening, which may occur concomitantly with either nucleocytoplasmic mRNA transport or translational initiation. In the cytoplasm, stimulates translation initiation and regulates mRNA decay through translation termination-coupled poly(A) shortening, probably mediated by PAN. The polypeptide is Polyadenylate-binding protein, cytoplasmic and nuclear (PAB1) (Eremothecium gossypii (strain ATCC 10895 / CBS 109.51 / FGSC 9923 / NRRL Y-1056) (Yeast)).